A 537-amino-acid chain; its full sequence is CTP synthase (537 aa).

Positions 1 to 267 are amidoligase domain; it reads MTKYIFVTGG…DQIVCDHLKL (267 aa). Ser13 is a CTP binding site. Residue Ser13 participates in UTP binding. An ATP-binding site is contributed by 14–19; the sequence is SIGKGI. Tyr54 is an L-glutamine binding site. Asp71 lines the ATP pocket. Residues Asp71 and Glu141 each coordinate Mg(2+). Residues 148-150, 188-193, and Lys224 contribute to the CTP site; these read DIE and KTKPTQ. UTP is bound by residues 188-193 and Lys224; that span reads KTKPTQ. 240–242 serves as a coordination point for ATP; the sequence is RDV. Positions 292–535 constitute a Glutamine amidotransferase type-1 domain; it reads RIALVGKYVE…VTAAVKNKNQ (244 aa). Gly354 contributes to the L-glutamine binding site. The active-site Nucleophile; for glutamine hydrolysis is the Cys381. Residues 382-385, Glu405, and Arg463 each bind L-glutamine; that span reads LGMQ. Catalysis depends on residues His508 and Glu510.

This sequence belongs to the CTP synthase family. In terms of assembly, homotetramer.

It catalyses the reaction UTP + L-glutamine + ATP + H2O = CTP + L-glutamate + ADP + phosphate + 2 H(+). It carries out the reaction L-glutamine + H2O = L-glutamate + NH4(+). The catalysed reaction is UTP + NH4(+) + ATP = CTP + ADP + phosphate + 2 H(+). It participates in pyrimidine metabolism; CTP biosynthesis via de novo pathway; CTP from UDP: step 2/2. With respect to regulation, allosterically activated by GTP, when glutamine is the substrate; GTP has no effect on the reaction when ammonia is the substrate. The allosteric effector GTP functions by stabilizing the protein conformation that binds the tetrahedral intermediate(s) formed during glutamine hydrolysis. Inhibited by the product CTP, via allosteric rather than competitive inhibition. Its function is as follows. Catalyzes the ATP-dependent amination of UTP to CTP with either L-glutamine or ammonia as the source of nitrogen. Regulates intracellular CTP levels through interactions with the four ribonucleotide triphosphates. This Streptococcus equi subsp. zooepidemicus (strain H70) protein is CTP synthase.